The following is a 95-amino-acid chain: Secretoglobin family 2A member 2 (95 aa).

Positions 1-18 (MKLVFLFLLVTIPICCYA) are cleaved as a signal peptide. Residue N35 is glycosylated (N-linked (GlcNAc...) asparagine).

The protein belongs to the secretoglobin family. Lipophilin subfamily. As to quaternary structure, prostatein is composed of three different peptides called C1, C2 and C3. These form covalent C1:C3 (F) and C2:C3 (S) heterodimers whose non-covalent association forms tetrameric (C1:C3/C3:C2) prostatein molecules. In terms of tissue distribution, highly expressed in ventral prostate.

Its subcellular location is the secreted. Part of prostatein which is the major secretory glycoprotein of ventral prostate gland. Steroid-binding protein; can bind non-polar steroids, cholesterol and a group of small proline-rich peptides. This chain is Secretoglobin family 2A member 2 (Scgb2a2), found in Rattus norvegicus (Rat).